Reading from the N-terminus, the 264-residue chain is tRNA (guanine-N(1)-)-methyltransferase (264 aa).

Residues glycine 125 and 145-150 each bind S-adenosyl-L-methionine; that span reads LGDFVL.

This sequence belongs to the RNA methyltransferase TrmD family. In terms of assembly, homodimer.

It is found in the cytoplasm. It catalyses the reaction guanosine(37) in tRNA + S-adenosyl-L-methionine = N(1)-methylguanosine(37) in tRNA + S-adenosyl-L-homocysteine + H(+). Its function is as follows. Specifically methylates guanosine-37 in various tRNAs. This is tRNA (guanine-N(1)-)-methyltransferase from Burkholderia cenocepacia (strain HI2424).